A 406-amino-acid polypeptide reads, in one-letter code: MAAKKQSKSAKALRTTVRYEDVAVSFTQEEWEYLTSTQKTLYQKVMSETFKNLTFVESKKKPQEPNPNLKDKDDDKSSTCTGVFKGGPFFFCLTCGKCFKKNTFLFNHQFPVRSRRLAVTKPQSRKALGHKPQHRGDRPFFCNLCGKTYRDASGLSRHRRAHVGYRPRSCPECGKCFRDQSEVNRHLKVHQNKKPVAGSHVKVHQNKPVASNQKQKGRVPPTTRESPAPALRHLKVIQGPVARAKARSSRASSLEVRSTSVTVARPREKVYCPYCRITFTMRTCLLNHLKIHFRRQPNQHFCCKESHSSNTLRMQKIYNCPVCDSSFRGKESLLNHLCSRRPIRLSKCWEILGHLLGYLREPLGNIFKVRESRKRRRKRISSDSSETEGPSGSDEVMEVDTDSDLS.

The KRAB domain occupies 17–88 (VRYEDVAVSF…TCTGVFKGGP (72 aa)). The disordered stretch occupies residues 57–77 (ESKKKPQEPNPNLKDKDDDKS). The segment at 90–113 (FFCLTCGKCFKKNTFLFNHQFPVR) adopts a C2H2-type 1; degenerate zinc-finger fold. C2H2-type zinc fingers lie at residues 140–162 (FFCNLCGKTYRDASGLSRHRRAH) and 168–190 (RSCPECGKCFRDQSEVNRHLKVH). Positions 194–226 (KPVAGSHVKVHQNKPVASNQKQKGRVPPTTRES) are disordered. The segment at 270-292 (VYCPYCRITFTMRTCLLNHLKIH) adopts a C2H2-type 4 zinc-finger fold. Residues 318-337 (YNCPVCDSSFRGKESLLNHL) form a C2H2-type 5; degenerate zinc finger. Positions 372-406 (SRKRRRKRISSDSSETEGPSGSDEVMEVDTDSDLS) are disordered. Residues 395–406 (EVMEVDTDSDLS) show a composition bias toward acidic residues.

It belongs to the krueppel C2H2-type zinc-finger protein family. In terms of tissue distribution, expressed in oligodendrocytes and at lower levels in astrocytes.

It localises to the nucleus. Transcription regulator required to maintain maternal and paternal gene imprinting, a process by which gene expression is restricted in a parent of origin-specific manner by epigenetic modification of genomic DNA and chromatin, including DNA methylation. Acts by controlling DNA methylation during the earliest multicellular stages of development at multiple imprinting control regions (ICRs). Acts together with ZNF445. Required for the establishment of maternal methylation imprints at SNRPN locus. Acts as a transcriptional repressor in Schwann cells. Binds to a 5'-TGCCGC-3' consensus sequence and recognizes the methylated CpG within this element. The protein is Zinc finger protein 57 (Zfp57) of Rattus norvegicus (Rat).